Consider the following 367-residue polypeptide: Alanine racemase (367 aa).

Lysine 40 serves as the catalytic Proton acceptor; specific for D-alanine. Lysine 40 is modified (N6-(pyridoxal phosphate)lysine). Substrate is bound at residue arginine 136. Tyrosine 263 (proton acceptor; specific for L-alanine) is an active-site residue. Position 310 (methionine 310) interacts with substrate.

This sequence belongs to the alanine racemase family. It depends on pyridoxal 5'-phosphate as a cofactor.

It catalyses the reaction L-alanine = D-alanine. It participates in amino-acid biosynthesis; D-alanine biosynthesis; D-alanine from L-alanine: step 1/1. In terms of biological role, catalyzes the interconversion of L-alanine and D-alanine. May also act on other amino acids. This is Alanine racemase (alr) from Streptococcus pneumoniae (strain Taiwan19F-14).